The following is a 494-amino-acid chain: 3-octaprenyl-4-hydroxybenzoate carboxy-lyase (494 aa).

A Mn(2+)-binding site is contributed by N172. Residues I175–R177, R189–L191, and R194–G195 each bind prenylated FMN. E238 serves as a coordination point for Mn(2+). Catalysis depends on D294, which acts as the Proton donor.

This sequence belongs to the UbiD family. In terms of assembly, homohexamer. The cofactor is prenylated FMN. Mn(2+) is required as a cofactor.

It is found in the cell membrane. The enzyme catalyses a 4-hydroxy-3-(all-trans-polyprenyl)benzoate + H(+) = a 2-(all-trans-polyprenyl)phenol + CO2. The protein operates within cofactor biosynthesis; ubiquinone biosynthesis. In terms of biological role, catalyzes the decarboxylation of 3-octaprenyl-4-hydroxy benzoate to 2-octaprenylphenol, an intermediate step in ubiquinone biosynthesis. This chain is 3-octaprenyl-4-hydroxybenzoate carboxy-lyase, found in Herminiimonas arsenicoxydans.